Reading from the N-terminus, the 464-residue chain is Properdin (464 aa).

Residues 1–22 (MPAEMQAPQWLLLLLVILPATG) form the signal peptide. 7 TSP type-1 domains span residues 24–72 (DPVL…QACR), 73–130 (SPQW…PCCP), 132–187 (MGGW…KTCP), 189–251 (HGAW…PPCP), 253–309 (AGGW…VPCP), 311–372 (NGEW…HNCI), and 374–457 (KGSW…PVCK). Disulfide bonds link cysteine 28–cysteine 52, cysteine 39–cysteine 68, and cysteine 53–cysteine 71. 2 C-linked (Man) tryptophan glycosylation sites follow: tryptophan 79 and tryptophan 82. Disulfide bonds link cysteine 85–cysteine 123, cysteine 89–cysteine 129, cysteine 100–cysteine 107, cysteine 128–cysteine 166, cysteine 144–cysteine 180, cysteine 148–cysteine 186, and cysteine 159–cysteine 170. C-linked (Man) tryptophan glycans are attached at residues tryptophan 135, tryptophan 138, and tryptophan 141. O-linked (Fuc...) threonine glycosylation is present at threonine 147. C-linked (Man) tryptophan glycans are attached at residues tryptophan 192, tryptophan 195, and tryptophan 198. 3 cysteine pairs are disulfide-bonded: cysteine 201-cysteine 244, cysteine 205-cysteine 250, and cysteine 220-cysteine 234. Serine 204 carries an O-linked (Fuc...) serine glycan. C-linked (Man) tryptophan glycans are attached at residues tryptophan 256 and tryptophan 259. Intrachain disulfides connect cysteine 265–cysteine 302, cysteine 269–cysteine 308, and cysteine 280–cysteine 292. An O-linked (Fuc...) threonine glycan is attached at threonine 268. Tryptophan 317 and tryptophan 320 each carry a C-linked (Man) tryptophan glycan. Disulfide bonds link cysteine 323-cysteine 365, cysteine 332-cysteine 371, and cysteine 345-cysteine 355. The tract at residues 346–354 (GGRKFNGKP) is interaction with Complement C3 beta chain. C-linked (Man) tryptophan glycans are attached at residues tryptophan 377, tryptophan 380, and tryptophan 383. 3 disulfide bridges follow: cysteine 386/cysteine 450, cysteine 390/cysteine 456, and cysteine 402/cysteine 434. Asparagine 423 carries an N-linked (GlcNAc...) asparagine glycan.

As to quaternary structure, in plasma, properdin exists as dimers, trimers or tetramers in the relative proportions of 26:54:20. Interacts with the pro-C3-convertase enzyme complex (C3b-Bb) comprised of Complement C3 beta chain (C3b) and the Complement factor B Bb fragment (Bb), where it binds (via its TSP type-1 5 domain) with C3b and Bb. This interaction stabilizes the complex and allows it to become the active C3-convertase enzyme complex (C3b-Bb-FP). Interacts with C3b. Interacts with CFB.

Its subcellular location is the secreted. Its function is as follows. A positive regulator of the alternate pathway of complement. It binds to and stabilizes the C3- and C5-convertase enzyme complexes. Inhibits CFI-CFH mediated degradation of Inhibits CFI-CFH mediated degradation of Complement C3 beta chain (C3b). In Mus musculus (Mouse), this protein is Properdin (Cfp).